The chain runs to 250 residues: Sugar fermentation stimulation protein homolog (250 aa).

Belongs to the SfsA family.

In Synechococcus sp. (strain CC9311), this protein is Sugar fermentation stimulation protein homolog.